We begin with the raw amino-acid sequence, 227 residues long: Biosynthetic peptidoglycan transglycosylase (227 aa).

Residues 7-27 (VALLTLLLLVAAPYVLTLVYG) traverse the membrane as a helical segment.

It belongs to the glycosyltransferase 51 family.

It localises to the cell inner membrane. It carries out the reaction [GlcNAc-(1-&gt;4)-Mur2Ac(oyl-L-Ala-gamma-D-Glu-L-Lys-D-Ala-D-Ala)](n)-di-trans,octa-cis-undecaprenyl diphosphate + beta-D-GlcNAc-(1-&gt;4)-Mur2Ac(oyl-L-Ala-gamma-D-Glu-L-Lys-D-Ala-D-Ala)-di-trans,octa-cis-undecaprenyl diphosphate = [GlcNAc-(1-&gt;4)-Mur2Ac(oyl-L-Ala-gamma-D-Glu-L-Lys-D-Ala-D-Ala)](n+1)-di-trans,octa-cis-undecaprenyl diphosphate + di-trans,octa-cis-undecaprenyl diphosphate + H(+). It functions in the pathway cell wall biogenesis; peptidoglycan biosynthesis. Functionally, peptidoglycan polymerase that catalyzes glycan chain elongation from lipid-linked precursors. The protein is Biosynthetic peptidoglycan transglycosylase of Rhodopseudomonas palustris (strain HaA2).